Consider the following 687-residue polypeptide: MMTQTLLIELLTEELPPKALNNLGNHFAASVAEGLEKAQLVDGAAEFTAYASPRRLAVQVKNVKAVQADQKIVKKGPAVANAMKDGAPTKALEGFARGAGAKIEDLTIVHDGKQDVYAYEYVQIGKPLGGLLEDIINQAVKKLPIPKVMRWGSSTFTFVRPVHGLVVLHGGDIVNVSVLGLQSGNKTLGHRFLSDGEITIENADSYAAQMREQGKVVASFAERKAAIQTVLEGQARRLNATAAADEALLDEVTALVEWPVVLEAGFEEHFLAVPQECLILTMQQNQKYFPLLDQNGKLMNRFLLVSNLQTEDPSHIIQGNERVLRARLSDAEFFYKQDQKATLESRLPKLTNVVYHNKIGSQAERIERLQSIAAHIAKALGADAAAAERAARLAKADLVTEMVGEFPELQGTMGKYYARLDGETEEITEAVEQHYQPRFAGDNLPEGKIAAAVALADKLETLVGIWGIGLIPTGDKDPYALRRAALGILRMLMQYGLDVNELIQTAFNSFPQGLLNEKTPSETADFMQARLAVLLQNDYPQDIVAAVLAKQPRRLDDLTAKLQAVAAFKQLPEAAALAAANKRVQNLLKKADAELGAVNESLLQQDEEKALFAAAQGLQPKIAAAVAEGNFQTALSELASVKPQVDAFFDGVMVMAEDAAVKQNRLNLLNRLAEQMNAVADIALLGE.

The protein belongs to the class-II aminoacyl-tRNA synthetase family. Tetramer of two alpha and two beta subunits.

The protein resides in the cytoplasm. The catalysed reaction is tRNA(Gly) + glycine + ATP = glycyl-tRNA(Gly) + AMP + diphosphate. The chain is Glycine--tRNA ligase beta subunit from Neisseria meningitidis serogroup B (strain ATCC BAA-335 / MC58).